Consider the following 701-residue polypeptide: UvrABC system protein B (701 aa).

Positions 35–422 (RRIQGGAADT…GGDVVEQVIR (388 aa)) constitute a Helicase ATP-binding domain. An ATP-binding site is contributed by 48-55 (GATGTGKT). A Beta-hairpin motif is present at residues 101–124 (YYDYYQPEAYVPQTDTYIEKDSSI). Residues 439 to 605 (QIDDLVHEIR…PLRKKIADIL (167 aa)) form the Helicase C-terminal domain. The tract at residues 620 to 648 (ARSRGEKRGTPTPRSGALSGPDRVAEQAK) is disordered. The UVR domain maps to 656–691 (AALVEQLTEQMHQAAADLQFELAARLRDEIKELKRE).

It belongs to the UvrB family. As to quaternary structure, forms a heterotetramer with UvrA during the search for lesions. Interacts with UvrC in an incision complex.

The protein localises to the cytoplasm. Its function is as follows. The UvrABC repair system catalyzes the recognition and processing of DNA lesions. A damage recognition complex composed of 2 UvrA and 2 UvrB subunits scans DNA for abnormalities. Upon binding of the UvrA(2)B(2) complex to a putative damaged site, the DNA wraps around one UvrB monomer. DNA wrap is dependent on ATP binding by UvrB and probably causes local melting of the DNA helix, facilitating insertion of UvrB beta-hairpin between the DNA strands. Then UvrB probes one DNA strand for the presence of a lesion. If a lesion is found the UvrA subunits dissociate and the UvrB-DNA preincision complex is formed. This complex is subsequently bound by UvrC and the second UvrB is released. If no lesion is found, the DNA wraps around the other UvrB subunit that will check the other stand for damage. The polypeptide is UvrABC system protein B (Thermobifida fusca (strain YX)).